A 314-amino-acid chain; its full sequence is L-lactate dehydrogenase 2 (314 aa).

Residues V16, D37, K42, Y68, and 82-83 (GL) contribute to the NAD(+) site. Substrate contacts are provided by residues Q85, R91, and 123 to 126 (NPVD). NAD(+) contacts are provided by residues 121 to 123 (ATN) and S146. 151–154 (DSAR) contributes to the substrate binding site. Beta-D-fructose 1,6-bisphosphate contacts are provided by R156 and H171. H178 acts as the Proton acceptor in catalysis. Phosphotyrosine is present on Y223. T232 lines the substrate pocket.

Belongs to the LDH/MDH superfamily. LDH family. Homotetramer.

Its subcellular location is the cytoplasm. The catalysed reaction is (S)-lactate + NAD(+) = pyruvate + NADH + H(+). The protein operates within fermentation; pyruvate fermentation to lactate; (S)-lactate from pyruvate: step 1/1. Its activity is regulated as follows. Allosterically activated by fructose 1,6-bisphosphate (FBP). Catalyzes the conversion of lactate to pyruvate. The chain is L-lactate dehydrogenase 2 from Bacillus anthracis.